The sequence spans 400 residues: Exodeoxyribonuclease 7 large subunit (400 aa).

It belongs to the XseA family. As to quaternary structure, heterooligomer composed of large and small subunits.

The protein localises to the cytoplasm. It catalyses the reaction Exonucleolytic cleavage in either 5'- to 3'- or 3'- to 5'-direction to yield nucleoside 5'-phosphates.. Bidirectionally degrades single-stranded DNA into large acid-insoluble oligonucleotides, which are then degraded further into small acid-soluble oligonucleotides. The chain is Exodeoxyribonuclease 7 large subunit from Clostridium perfringens (strain 13 / Type A).